The sequence spans 348 residues: Oxygen-dependent coproporphyrinogen-III oxidase (348 aa).

Serine 104 provides a ligand contact to substrate. Residues histidine 108 and histidine 118 each contribute to the a divalent metal cation site. The active-site Proton donor is the histidine 118. 120-122 (NYR) provides a ligand contact to substrate. Residues histidine 152 and histidine 182 each coordinate a divalent metal cation. The interval 272–307 (YAEFNLVWDRGTIFGLQTNGRTESILMSLPPLARWE) is important for dimerization.

Belongs to the aerobic coproporphyrinogen-III oxidase family. As to quaternary structure, homodimer. The cofactor is a divalent metal cation.

The protein localises to the cytoplasm. It catalyses the reaction coproporphyrinogen III + O2 + 2 H(+) = protoporphyrinogen IX + 2 CO2 + 2 H2O. It functions in the pathway porphyrin-containing compound metabolism; protoporphyrin-IX biosynthesis; protoporphyrinogen-IX from coproporphyrinogen-III (O2 route): step 1/1. Involved in the heme and chlorophyll biosynthesis. Catalyzes the aerobic oxidative decarboxylation of propionate groups of rings A and B of coproporphyrinogen-III to yield the vinyl groups in protoporphyrinogen-IX. This chain is Oxygen-dependent coproporphyrinogen-III oxidase, found in Prochlorococcus marinus (strain NATL1A).